Consider the following 498-residue polypeptide: MTDKTENSGLSSDATEVRAQKLKLLREQIGDVYPAHFHRTMTNAELAEKYQDLAPDTETQDLVTVAGRVYSSRNSGMFMDIHDASGKIQVFSHKDTTPEEARGLLPMIDLGDVIGVTGLVRRTKRGELTINAQQITMLTKSLLPMPEKYHGLADIETRYRKRYLDIMVNEESKLRFQQRSRIVSSLRRFLEDEGFMEVETPMLQPIYGGATAEPFKTHHNTLKLDMYLRIAPELYLKRVLVSGLTDKVFEINRNFRNEGVSTRHNPEFTMMECYWAYADYEDVMGLVERMFETLALAVHGTTEFEFGDKQLSFKGPFPRVSMPAAVKDATGIDFLAIKSDEEARQAARDAGVEIEKDATWGEVLAFLFEEKVEATLIQPAHVIHFPKDISPFAKEVPGEPRLVERFETYCNGWEIGNAFSELNDPVEQRARMVEQMEQAHARGEKEKTLDEDFLDAMDQGMPPAGGLGIGVDRLIMLLTNSPSIRDIILFPARRHKSD.

2 residues coordinate Mg(2+): glutamate 407 and glutamate 414.

This sequence belongs to the class-II aminoacyl-tRNA synthetase family. As to quaternary structure, homodimer. It depends on Mg(2+) as a cofactor.

It localises to the cytoplasm. The enzyme catalyses tRNA(Lys) + L-lysine + ATP = L-lysyl-tRNA(Lys) + AMP + diphosphate. The sequence is that of Lysine--tRNA ligase from Sinorhizobium medicae (strain WSM419) (Ensifer medicae).